Here is a 1106-residue protein sequence, read N- to C-terminus: Platelet-derived growth factor receptor beta (1106 aa).

A signal peptide spans 1–32 (MRLPGAMPALALKGELLLLSLLLLLEPQISQG). 5 Ig-like C2-type domains span residues 33–120 (LVVT…YIFV), 129–210 (PNDA…YRLQ), 214–309 (INVS…INIT), 331–403 (HRSR…HEDA), and 416–524 (PVRV…VIVV). Residues 33–532 (LVVTPPGPEL…VVPHSLPFKV (500 aa)) are Extracellular-facing. Asparagine 45, asparagine 89, and asparagine 103 each carry an N-linked (GlcNAc...) asparagine glycan. Cysteine 54 and cysteine 100 are joined by a disulfide. A disulfide bridge links cysteine 149 with cysteine 190. Asparagine 215 and asparagine 230 each carry an N-linked (GlcNAc...) asparagine glycan. An intrachain disulfide couples cysteine 235 to cysteine 291. Asparagine 292, asparagine 307, asparagine 354, asparagine 371, asparagine 468, and asparagine 479 each carry an N-linked (GlcNAc...) asparagine glycan. Cysteines 436 and 508 form a disulfide. Residues 533–553 (VVISAILALVVLTIISLIILI) traverse the membrane as a helical segment. Over 554–1106 (MLWQKKPRYE…PRAEAEDSFL (553 aa)) the chain is Cytoplasmic. 3 positions are modified to phosphotyrosine; by autocatalysis: tyrosine 562, tyrosine 579, and tyrosine 581. The region spanning 600–962 (LVLGRTLGSG…QLVLLLERLL (363 aa)) is the Protein kinase domain. ATP contacts are provided by residues 606–614 (LGSGAFGQV) and lysine 634. At tyrosine 686 the chain carries Phosphotyrosine; by ABL1 and ABL2. Residues tyrosine 716, tyrosine 740, tyrosine 751, tyrosine 763, tyrosine 771, tyrosine 775, and tyrosine 778 each carry the phosphotyrosine; by autocatalysis modification. Aspartate 826 serves as the catalytic Proton acceptor. Position 857 is a phosphotyrosine; by autocatalysis (tyrosine 857). A phosphotyrosine; by ABL1 and ABL2 mark is found at tyrosine 934 and tyrosine 970. 2 positions are modified to phosphotyrosine; by autocatalysis: tyrosine 1009 and tyrosine 1021. The disordered stretch occupies residues 1019–1106 (NDYIIPLPDP…PRAEAEDSFL (88 aa)). The segment covering 1043-1060 (SLASSTLNEVNTSSTISC) has biased composition (polar residues). The span at 1066-1088 (PQDEPEPEPQLELQVEPEPELEQ) shows a compositional bias: acidic residues.

The protein belongs to the protein kinase superfamily. Tyr protein kinase family. CSF-1/PDGF receptor subfamily. Interacts with homodimeric PDGFB and PDGFD, and with heterodimers formed by PDGFA and PDGFB. May also interact with homodimeric PDGFC. Monomer in the absence of bound ligand. Interaction with homodimeric PDGFB, heterodimers formed by PDGFA and PDGFB or homodimeric PDGFD, leads to receptor dimerization, where both PDGFRA homodimers and heterodimers with PDGFRB are observed. Interacts with SH2B2/APS. Interacts directly (tyrosine phosphorylated) with SHB. Interacts (tyrosine phosphorylated) with PIK3R1 and RASA1. Interacts (tyrosine phosphorylated) with CBL. Interacts (tyrosine phosphorylated) with SRC and SRC family kinases. Interacts (tyrosine phosphorylated) with PIK3C2B, maybe indirectly. Interacts (tyrosine phosphorylated) with SHC1, GRB7, GRB10 and NCK1. Interaction with GRB2 is mediated by SHC1. Interacts (via C-terminus) with NHERF1. In terms of processing, autophosphorylated on tyrosine residues upon ligand binding. Autophosphorylation occurs in trans, i.e. one subunit of the dimeric receptor phosphorylates tyrosine residues on the other subunit. Phosphorylation at Tyr-579, and to a lesser degree, at Tyr-581, is important for interaction with SRC family kinases. Phosphorylation at Tyr-740 and Tyr-751 is important for interaction with PIK3R1. Phosphorylation at Tyr-751 is important for interaction with NCK1. Phosphorylation at Tyr-771 and Tyr-857 is important for interaction with RASA1/GAP. Phosphorylation at Tyr-857 is important for efficient phosphorylation of PLCG1 and PTPN11, resulting in increased phosphorylation of AKT1, MAPK1/ERK2 and/or MAPK3/ERK1, PDCD6IP/ALIX and STAM, and in increased cell proliferation. Phosphorylation at Tyr-1009 is important for interaction with PTPN11. Phosphorylation at Tyr-1009 and Tyr-1021 is important for interaction with PLCG1. Phosphorylation at Tyr-1021 is important for interaction with CBL; PLCG1 and CBL compete for the same binding site. Dephosphorylated by PTPRJ at Tyr-751, Tyr-857, Tyr-1009 and Tyr-1021. Dephosphorylated by PTPN2 at Tyr-579 and Tyr-1021. Post-translationally, N-glycosylated. Ubiquitinated. After autophosphorylation, the receptor is polyubiquitinated, leading to its degradation.

It is found in the cell membrane. Its subcellular location is the cytoplasmic vesicle. It localises to the lysosome lumen. The enzyme catalyses L-tyrosyl-[protein] + ATP = O-phospho-L-tyrosyl-[protein] + ADP + H(+). Present in an inactive conformation in the absence of bound ligand. Binding of PDGFB and/or PDGFD leads to dimerization and activation by autophosphorylation on tyrosine residues. Inhibited by imatinib. Functionally, tyrosine-protein kinase that acts as a cell-surface receptor for homodimeric PDGFB and PDGFD and for heterodimers formed by PDGFA and PDGFB, and plays an essential role in the regulation of embryonic development, cell proliferation, survival, differentiation, chemotaxis and migration. Plays an essential role in blood vessel development by promoting proliferation, migration and recruitment of pericytes and smooth muscle cells to endothelial cells. Plays a role in the migration of vascular smooth muscle cells and the formation of neointima at vascular injury sites. Required for normal development of the cardiovascular system. Required for normal recruitment of pericytes (mesangial cells) in the kidney glomerulus, and for normal formation of a branched network of capillaries in kidney glomeruli. Promotes rearrangement of the actin cytoskeleton and the formation of membrane ruffles. Binding of its cognate ligands - homodimeric PDGFB, heterodimers formed by PDGFA and PDGFB or homodimeric PDGFD -leads to the activation of several signaling cascades; the response depends on the nature of the bound ligand and is modulated by the formation of heterodimers between PDGFRA and PDGFRB. Phosphorylates PLCG1, PIK3R1, PTPN11, RASA1/GAP, CBL, SHC1 and NCK1. Activation of PLCG1 leads to the production of the cellular signaling molecules diacylglycerol and inositol 1,4,5-trisphosphate, mobilization of cytosolic Ca(2+) and the activation of protein kinase C. Phosphorylation of PIK3R1, the regulatory subunit of phosphatidylinositol 3-kinase, leads to the activation of the AKT1 signaling pathway. Phosphorylation of SHC1, or of the C-terminus of PTPN11, creates a binding site for GRB2, resulting in the activation of HRAS, RAF1 and down-stream MAP kinases, including MAPK1/ERK2 and/or MAPK3/ERK1. Promotes phosphorylation and activation of SRC family kinases. Promotes phosphorylation of PDCD6IP/ALIX and STAM. Receptor signaling is down-regulated by protein phosphatases that dephosphorylate the receptor and its down-stream effectors, and by rapid internalization of the activated receptor. This is Platelet-derived growth factor receptor beta (PDGFRB) from Homo sapiens (Human).